We begin with the raw amino-acid sequence, 95 residues long: Aspartyl/glutamyl-tRNA(Asn/Gln) amidotransferase subunit C (95 aa).

The protein belongs to the GatC family. As to quaternary structure, heterotrimer of A, B and C subunits.

It carries out the reaction L-glutamyl-tRNA(Gln) + L-glutamine + ATP + H2O = L-glutaminyl-tRNA(Gln) + L-glutamate + ADP + phosphate + H(+). The enzyme catalyses L-aspartyl-tRNA(Asn) + L-glutamine + ATP + H2O = L-asparaginyl-tRNA(Asn) + L-glutamate + ADP + phosphate + 2 H(+). Its function is as follows. Allows the formation of correctly charged Asn-tRNA(Asn) or Gln-tRNA(Gln) through the transamidation of misacylated Asp-tRNA(Asn) or Glu-tRNA(Gln) in organisms which lack either or both of asparaginyl-tRNA or glutaminyl-tRNA synthetases. The reaction takes place in the presence of glutamine and ATP through an activated phospho-Asp-tRNA(Asn) or phospho-Glu-tRNA(Gln). This Pseudomonas paraeruginosa (strain DSM 24068 / PA7) (Pseudomonas aeruginosa (strain PA7)) protein is Aspartyl/glutamyl-tRNA(Asn/Gln) amidotransferase subunit C.